Consider the following 432-residue polypeptide: MALEQIDYEYQSGFGNSFESEAIKGTLPKGRNAPQNCPLDLYAEQLSGNAFTAPRHTQQRSWLYRIRPSVCHTPLKPIDSGLVCDLNNLHVDPNQLRWKPFPITEDKPHDFVEGLITIAGAGHASVRHGLAIHIYTATKSMENKSFYNSDGDFLIVPQQGTLDIQTEFGFMKVKSGEICVIQRGITFSVNVEGPTRGYICEVFGSHFKLPDLGPIGANGLANPRDFLSPVAAYEKKEGIEHTKINKFLGKLFSATQTYSPFNVVAWHGNYCPYKYDLSLFCVVNSVSFDHLDPSIFTVLTAPTNEVGVAAADFVIFPPRWLVQENTFRPPYFHRNCMSEFMGLIRGVYEAKKEGFLPGGGSLHSCMTPHGPDSDTFYAAIKAELKPTKIPDVALAFMFESSLILGISDYAKKNFIDDDYWKCWQGLKDNSKI.

Residues H333, E339, and H369 each contribute to the Fe cation site.

It belongs to the homogentisate dioxygenase family. Requires Fe cation as cofactor.

The catalysed reaction is homogentisate + O2 = 4-maleylacetoacetate + H(+). It participates in amino-acid degradation; L-phenylalanine degradation; acetoacetate and fumarate from L-phenylalanine: step 4/6. The sequence is that of Homogentisate 1,2-dioxygenase (hgd) from Dictyostelium discoideum (Social amoeba).